A 377-amino-acid polypeptide reads, in one-letter code: Spermidine/putrescine import ATP-binding protein PotA (377 aa).

An ABC transporter domain is found at 18–248 (IRLSGISKSF…PKNLFVARFI (231 aa)). ATP is bound at residue 50–57 (GPSGCGKT).

It belongs to the ABC transporter superfamily. Spermidine/putrescine importer (TC 3.A.1.11.1) family. The complex is composed of two ATP-binding proteins (PotA), two transmembrane proteins (PotB and PotC) and a solute-binding protein (PotD).

The protein localises to the cell inner membrane. It catalyses the reaction ATP + H2O + polyamine-[polyamine-binding protein]Side 1 = ADP + phosphate + polyamineSide 2 + [polyamine-binding protein]Side 1.. In terms of biological role, part of the ABC transporter complex PotABCD involved in spermidine/putrescine import. Responsible for energy coupling to the transport system. This Vibrio vulnificus (strain CMCP6) protein is Spermidine/putrescine import ATP-binding protein PotA.